A 400-amino-acid chain; its full sequence is ATP phosphoribosyltransferase regulatory subunit (400 aa).

The protein belongs to the class-II aminoacyl-tRNA synthetase family. HisZ subfamily. In terms of assembly, heteromultimer composed of HisG and HisZ subunits.

It localises to the cytoplasm. It functions in the pathway amino-acid biosynthesis; L-histidine biosynthesis; L-histidine from 5-phospho-alpha-D-ribose 1-diphosphate: step 1/9. Functionally, required for the first step of histidine biosynthesis. May allow the feedback regulation of ATP phosphoribosyltransferase activity by histidine. The protein is ATP phosphoribosyltransferase regulatory subunit of Hahella chejuensis (strain KCTC 2396).